A 363-amino-acid polypeptide reads, in one-letter code: NADH-quinone oxidoreductase subunit H (363 aa).

The next 10 membrane-spanning stretches (helical) occupy residues 29–49, 62–82, 96–116, 127–147, 163–183, 202–222, 238–257, 278–298, 299–319, and 339–359; these read VLKILLIAVPVIVSVAFYVVW, GPMYVGMGIFQAFADVFKLLF, FIIAPLLTLAPAFAAWSVVPF, VGLLYLLAMTSLGVYGIILAG, AAQVVSYEIAMGFALVGVMIA, FFDWFLIPLFPLFIVYWVSGV, EIVAGHMVEYSGGAFALFFL, WLSPIQGWVNADISPWIDWLW, KGGWPWLLMKVFFFASAYIWF, and FIPLTIVWIAVTALMVFYGVI.

The protein belongs to the complex I subunit 1 family. As to quaternary structure, NDH-1 is composed of 14 different subunits. Subunits NuoA, H, J, K, L, M, N constitute the membrane sector of the complex.

The protein localises to the cell inner membrane. It catalyses the reaction a quinone + NADH + 5 H(+)(in) = a quinol + NAD(+) + 4 H(+)(out). NDH-1 shuttles electrons from NADH, via FMN and iron-sulfur (Fe-S) centers, to quinones in the respiratory chain. The immediate electron acceptor for the enzyme in this species is believed to be ubiquinone. Couples the redox reaction to proton translocation (for every two electrons transferred, four hydrogen ions are translocated across the cytoplasmic membrane), and thus conserves the redox energy in a proton gradient. This subunit may bind ubiquinone. This chain is NADH-quinone oxidoreductase subunit H, found in Xanthomonas oryzae pv. oryzae (strain MAFF 311018).